Here is a 1958-residue protein sequence, read N- to C-terminus: Echinoderm microtubule-associated protein-like 6 (1958 aa).

WD repeat units follow at residues 59–100 (GHND…TVSL), 104–145 (VHTH…LLAS), 148–187 (GHSDRIFDISWDPYQPNRVVSCGVKHIKFWTLCGNALTAK), 195–233 (GDLQTILCLACAKEDITYSGALNGDIYVWKGLNLVRTIQ), 235–273 (AHSAGIFSMYACEEGFATGGRDGCIRLWDTDFKPITKID), 280–321 (GYKG…LILQ), 323–362 (HCEGELWALALHPKKPLAVTGSDDRSVRLWSLADHALIAR), 364–403 (NMEEAVRSVAFSPDGSQLALGMKDGSFIVLRVRDMTEVVH), 406–445 (DRKEVIHEMKFSPDGSYLAVGSNDGPVDVYAVAQRYKKIG), and 561–601 (GHSA…VSNG). Residues 603-626 (LETAPQEGGADSYSEESDSDLSDV) form a disordered region. A compositionally biased stretch (acidic residues) spans 615-626 (YSEESDSDLSDV). 10 WD repeats span residues 725–766 (GHDD…CLSL), 770–811 (QHQR…KIAT), 814–853 (GHKDKIFVVKCNPHHVDKLVTVGIKHIKFWQQAGGGFTSK), 861–900 (GKLETMMCVSYGRMEDLVFSGAATGDIFIWKDILLLKTVK), 901–940 (AHDGPVFAMYALDKGFVTGGKDGIVELWDDMFERCLKTYA), 996–1035 (HMEGEVWGLAAHPLLPICATVSDDKTLRIWELSAQHRMLA), 1038–1077 (KLKKGGRCCAFSPDGKALAVGLNDGSFLVVNADTVEDMVS), 1080–1120 (HRKE…RVGI), 1191–1230 (SDITDVNAASLTKDCSLLATGDDFGFVKLFSYPVKGQHAR), and 1236–1276 (GHSA…TQES). The segment covering 1322–1337 (KPHQQLKEVSVEERPP) has biased composition (basic and acidic residues). The tract at residues 1322–1353 (KPHQQLKEVSVEERPPVSRAAPQPEKLQKNNI) is disordered. 10 WD repeats span residues 1412-1456 (EHTD…TLSM), 1460-1501 (FHSK…KVAS), 1504-1543 (GHLERIFVVEFRPDSDTQFVSVGVKHMKFWTLAGSALLYK), 1553-1591 (AKMQTMLSVAFGANNLTFTGAINGDVYVWKDHFLIRLVA), 1593-1638 (AHTG…CRAF), 1685-1724 (HMEGEIWGLATHPSKDLFISASNDGTARIWDLADKKLLNK), 1726-1767 (SLGH…GKKR), 1768-1807 (DRKSAIQDIRISPDNRFLAVGSSEHTVDFYDLTQGTNLNR), 1880-1919 (ADKADVNCACVTHAGLNIVTGDDFGLVKLFDFPCTEKFAK), and 1925-1958 (GHSAHVTNIRFSYDDKYVVSTGGDDCSVFVWRCL).

It belongs to the WD repeat EMAP family.

The protein localises to the cytoplasm. It localises to the cytoskeleton. Its function is as follows. May modify the assembly dynamics of microtubules, such that microtubules are slightly longer, but more dynamic. The sequence is that of Echinoderm microtubule-associated protein-like 6 (EML6) from Homo sapiens (Human).